Here is a 671-residue protein sequence, read N- to C-terminus: K(+)-insensitive pyrophosphate-energized proton pump (671 aa).

The next 5 helical transmembrane spans lie at 4 to 24 (LIFT…FFAK), 57 to 77 (TIAV…DEGL), 79 to 99 (IAAG…IGMS), 128 to 148 (AVTG…LYIL), and 156 to 176 (VGFG…GGIF). K178 provides a ligand contact to substrate. The Mg(2+) site is built by D181, D185, N208, and D211. 6 consecutive transmembrane segments (helical) span residues 223 to 243 (LFET…LIIG), 249 to 269 (VLYP…SVFF), 285 to 305 (GVGG…GFLM), 310 to 330 (FFYV…VTEY), 365 to 385 (TLVP…IVGG), and 393 to 413 (LYGI…IVAL). D421 lines the Mg(2+) pocket. Helical transmembrane passes span 452 to 472 (AVTK…LFAD), 490 to 510 (VVLS…AVMM), 558 to 578 (MAMP…FLGP), and 579 to 599 (EALA…ALMM). 3 residues coordinate Ca(2+): D607, D633, and D637. K640 lines the substrate pocket. Residues 650 to 670 (LIKVVNMVAILFSPLIIGGGF) form a helical membrane-spanning segment.

The protein belongs to the H(+)-translocating pyrophosphatase (TC 3.A.10) family. K(+)-insensitive subfamily. In terms of assembly, homodimer. Mg(2+) serves as cofactor.

The protein localises to the cell membrane. It carries out the reaction diphosphate + H2O + H(+)(in) = 2 phosphate + 2 H(+)(out). Functionally, proton pump that utilizes the energy of pyrophosphate hydrolysis as the driving force for proton movement across the membrane. Generates a proton motive force. This is K(+)-insensitive pyrophosphate-energized proton pump from Methanosarcina mazei (strain ATCC BAA-159 / DSM 3647 / Goe1 / Go1 / JCM 11833 / OCM 88) (Methanosarcina frisia).